Reading from the N-terminus, the 213-residue chain is Probable nicotinate-nucleotide adenylyltransferase (213 aa).

This sequence belongs to the NadD family.

The enzyme catalyses nicotinate beta-D-ribonucleotide + ATP + H(+) = deamido-NAD(+) + diphosphate. It participates in cofactor biosynthesis; NAD(+) biosynthesis; deamido-NAD(+) from nicotinate D-ribonucleotide: step 1/1. Its function is as follows. Catalyzes the reversible adenylation of nicotinate mononucleotide (NaMN) to nicotinic acid adenine dinucleotide (NaAD). This chain is Probable nicotinate-nucleotide adenylyltransferase, found in Pectobacterium atrosepticum (strain SCRI 1043 / ATCC BAA-672) (Erwinia carotovora subsp. atroseptica).